Here is a 343-residue protein sequence, read N- to C-terminus: MDHAADAHRTDLMTITRHVLNEQSRNPESRGDFTILLSHIVLGCKFVASAVNKAGLAQLIGLAGETNVQGEEQKKLDVLSNEVFVKALVSSGRTCVLVSEEDEETTFVDPKLRGKYCVCFDPLDGSSNIDCGVSIGTIFGIYMIKDKDNVTLSDVLQPGKDMLAAGYCMYGSSCTLVLSTGTGVNGFTLDPSLGEFILTHPDIKIPKKGKIYSVNEGNAKNWDVPVAKFVEKCKYPKDGSPPKSLRYIGSMVADVHRTLLYGGVFLYPADQKSPNGKLRVLYEVFPMSFLMEQAGGQSFTGKERALDLVPTKIHERSPIFLGSYDDVEEIKALYAEQAKSSSA.

Mg(2+)-binding residues include Glu71, Glu100, Asp121, Leu123, and Asp124. Substrate-binding positions include 124 to 127, Asn215, Tyr247, Tyr267, and Lys277; that span reads DGSS. Glu283 is a Mg(2+) binding site.

It belongs to the FBPase class 1 family. Mg(2+) is required as a cofactor.

Its subcellular location is the cytoplasm. The catalysed reaction is beta-D-fructose 1,6-bisphosphate + H2O = beta-D-fructose 6-phosphate + phosphate. This Saccharum hybrid (Sugarcane) protein is Fructose-1,6-bisphosphatase, cytosolic (CFBP).